The primary structure comprises 238 residues: CD209 antigen-like protein A (238 aa).

Topologically, residues 1 to 51 are cytoplasmic; the sequence is MSDSKEMGKRQLRPLDEELLTSSHTRHSIKGFGFQTNSGFSSFTGCLVHSQ. Residues 52–72 traverse the membrane as a helical; Signal-anchor for type II membrane protein segment; that stretch reads VPLALQVLFLAVCSVLLVVIL. Residues 73 to 238 lie on the Extracellular side of the membrane; sequence VKVYKIPSSQ…KKLSTSCPSK (166 aa). C108 and C119 are joined by a disulfide. Positions 115–229 constitute a C-type lectin domain; that stretch reads FQGSCYFFSV…CTNKKFWICK (115 aa). N130 carries an N-linked (GlcNAc...) asparagine glycan. Disulfide bonds link C136-C228 and C207-C220. Positions 198, 200, 202, 205, 216, and 217 each coordinate Ca(2+). The N-linked (GlcNAc...) asparagine glycan is linked to N216.

Predominantly expressed in dendritic cells. Detected at very low levels in lung, spleen, lymph nodes and bone marrow.

Its subcellular location is the membrane. Functionally, probable pathogen-recognition receptor. May mediate the endocytosis of pathogens which are subsequently degraded in lysosomal compartments. May recognize in a calcium-dependent manner high mannose N-linked oligosaccharides in a variety of pathogen antigens. The protein is CD209 antigen-like protein A (Cd209a) of Mus musculus (Mouse).